A 251-amino-acid polypeptide reads, in one-letter code: MHISPDQLIFWEYGFVKLNGTIIYTWLLMLLLAVGSKTITKRLSRGEERSRWQNLLEVIIITIQKQISEVGLRQPRTYLPFLGTLFVFVAVANLFAVFPGYEPPTGSLSTTVALAICVFVAVPFYGIREQGLRRYLQSYLKPVPLLLPFNILGEFTRTLALAVRLFGNMMSGTMILAIMLIITPFIFPVVMGVLHLLIGGVQAYIFSILATVYIAAATSDNGENAGASDDEGGEDAKSACAAGGKICKHKP.

A run of 5 helical transmembrane segments spans residues 14–34, 78–98, 107–127, 174–194, and 196–216; these read GFVK…LLAV, YLPF…FAVF, SLST…FYGI, MILA…MGVL, and LLIG…YIAA. The segment at 224–251 is disordered; sequence NAGASDDEGGEDAKSACAAGGKICKHKP.

Belongs to the ATPase A chain family. F-type ATPases have 2 components, CF(1) - the catalytic core - and CF(0) - the membrane proton channel. CF(1) has five subunits: alpha(3), beta(3), gamma(1), delta(1), epsilon(1). CF(0) has three main subunits: a(1), b(2) and c(9-12). The alpha and beta chains form an alternating ring which encloses part of the gamma chain. CF(1) is attached to CF(0) by a central stalk formed by the gamma and epsilon chains, while a peripheral stalk is formed by the delta and b chains.

It is found in the cell inner membrane. In terms of biological role, key component of the proton channel; it plays a direct role in the translocation of protons across the membrane. The sequence is that of ATP synthase subunit a from Nitrosospira multiformis (strain ATCC 25196 / NCIMB 11849 / C 71).